We begin with the raw amino-acid sequence, 476 residues long: Bridging integrator 2 (476 aa).

Residues 26 to 242 (VLQKLGKTVE…MGKLDKQHSS (217 aa)) form the BAR domain. Disordered stretches follow at residues 269-369 (YPCP…TEGA) and 395-476 (GAAP…LTPL). Residues 279-292 (EPSSGAEQTPTSPR) show a composition bias toward polar residues. The span at 310–324 (PAEPGAPMPGPPPAS) shows a compositional bias: pro residues. The segment covering 325 to 339 (PTSVRSASESESECS) has biased composition (low complexity). The segment covering 340–353 (GESREIDLSPKEME) has biased composition (basic and acidic residues). A compositionally biased stretch (polar residues) spans 461–476 (VSCNPPQDPSESLTPL).

The protein resides in the cytoplasm. In Gallus gallus (Chicken), this protein is Bridging integrator 2 (BIN2).